The primary structure comprises 178 residues: Large ribosomal subunit protein uL6 (178 aa).

Belongs to the universal ribosomal protein uL6 family. In terms of assembly, part of the 50S ribosomal subunit.

Functionally, this protein binds to the 23S rRNA, and is important in its secondary structure. It is located near the subunit interface in the base of the L7/L12 stalk, and near the tRNA binding site of the peptidyltransferase center. This Arthrobacter sp. (strain FB24) protein is Large ribosomal subunit protein uL6.